A 330-amino-acid polypeptide reads, in one-letter code: Electron transfer flavoprotein subunit alpha (330 aa).

Position 270–298 (270–298 (LYIACGISGAIQHLAGMSNSGTIVAINKN)) interacts with FAD.

Belongs to the ETF alpha-subunit/FixB family. As to quaternary structure, heterodimer of an alpha and a beta subunit. FAD serves as cofactor.

In terms of biological role, the electron transfer flavoprotein serves as a specific electron acceptor for other dehydrogenases. It transfers the electrons to the main respiratory chain via ETF-ubiquinone oxidoreductase (ETF dehydrogenase). The polypeptide is Electron transfer flavoprotein subunit alpha (etfA) (Thermoanaerobacterium thermosaccharolyticum (strain ATCC 7956 / DSM 571 / NCIMB 9385 / NCA 3814 / NCTC 13789 / WDCM 00135 / 2032) (Clostridium thermosaccharolyticum)).